The chain runs to 160 residues: Transcription elongation factor GreA (160 aa).

Residues 4 to 70 (QKQYPMTQEG…IEQDIQRIEH (67 aa)) adopt a coiled-coil conformation.

The protein belongs to the GreA/GreB family.

Necessary for efficient RNA polymerase transcription elongation past template-encoded arresting sites. The arresting sites in DNA have the property of trapping a certain fraction of elongating RNA polymerases that pass through, resulting in locked ternary complexes. Cleavage of the nascent transcript by cleavage factors such as GreA or GreB allows the resumption of elongation from the new 3'terminus. GreA releases sequences of 2 to 3 nucleotides. This is Transcription elongation factor GreA from Staphylococcus carnosus (strain TM300).